Here is a 77-residue protein sequence, read N- to C-terminus: Translation initiation factor IF-1, chloroplastic (77 aa).

Positions 1–71 (MKEQKLIHEG…TRGRIIYRLR (71 aa)) constitute an S1-like domain.

This sequence belongs to the IF-1 family. As to quaternary structure, component of the 30S ribosomal translation pre-initiation complex which assembles on the 30S ribosome in the order IF-2 and IF-3, IF-1 and N-formylmethionyl-tRNA(fMet); mRNA recruitment can occur at any time during PIC assembly.

It localises to the plastid. Its subcellular location is the chloroplast. In terms of biological role, one of the essential components for the initiation of protein synthesis. Stabilizes the binding of IF-2 and IF-3 on the 30S subunit to which N-formylmethionyl-tRNA(fMet) subsequently binds. Helps modulate mRNA selection, yielding the 30S pre-initiation complex (PIC). Upon addition of the 50S ribosomal subunit IF-1, IF-2 and IF-3 are released leaving the mature 70S translation initiation complex. The polypeptide is Translation initiation factor IF-1, chloroplastic (Cabomba caroliniana (Carolina fanwort)).